The sequence spans 212 residues: Probable nicotinate-nucleotide adenylyltransferase (212 aa).

It belongs to the NadD family.

The catalysed reaction is nicotinate beta-D-ribonucleotide + ATP + H(+) = deamido-NAD(+) + diphosphate. It participates in cofactor biosynthesis; NAD(+) biosynthesis; deamido-NAD(+) from nicotinate D-ribonucleotide: step 1/1. Functionally, catalyzes the reversible adenylation of nicotinate mononucleotide (NaMN) to nicotinic acid adenine dinucleotide (NaAD). In Shewanella sp. (strain ANA-3), this protein is Probable nicotinate-nucleotide adenylyltransferase.